Here is a 375-residue protein sequence, read N- to C-terminus: MLGCFFFFFIQYKVQVEIFVFKVHYLREDTPFPKMVVDVDALANEAIGLLDQCKDDNYRVCILIVGPPGSGKSTVAQDLSRQINHRFDEYRLQGNQKSAHGGTRSRASDVALASDVPEITTPLSEELAFNGGILPKYVEDVNFQPVKRRLENGDLQILGRGGLPNAFTISNDVEPDEESSFAQIVPMDGFHLSRQCLSSFQNPQEAHKRRGSPPTFDSNNFAQLCKTLAQTCTIKPGSCDAKSCFEFMAKTYDPHFPCIKIPGFDHSLKDPTPDQFCLNGHTRIVILEGLYLLYDKENWQRVHEILQNTGSLLVWYIDIEDHVIEERVAKRHFNSGLADSVEQGRLKFQGNDLLNARLIRKNLVQSGKVVTLRND.

66–74 (GPPGSGKST) lines the ATP pocket.

It belongs to the YFH7 family.

Its function is as follows. ATP-dependent kinase that could be involved in endoplasmic reticulum membrane assembly. In Zygosaccharomyces rouxii (strain ATCC 2623 / CBS 732 / NBRC 1130 / NCYC 568 / NRRL Y-229), this protein is ATP-dependent kinase YFH7 (YFH7).